The chain runs to 227 residues: MSKEIPTPYMWSYQPQMGLAAGAAQDYSTRINYMSAGPHMISRVNGIRAHRNRILLEQAAITTTPRNNLNPRSWPAALVYQESPAPTTVVLPRDAQAEVQMTNSGAQLAGGFRHRVRSPGQGITHLKIRGRGIQLNDESVSSSLGLRPDGTFQIGGAGRSSFTPRQAILTLQTSSSEPRSGGIGTLQFIEEFVPSVYFNPFSGPPGHYPDQFIPNFDAVKDSADGYD.

A Phosphothreonine; by host modification is found at Thr-64. A propeptide spanning residues Phe-112–Ala-157 is cleaved from the precursor. Phosphoserine; by host is present on residues Ser-118 and Ser-174.

This sequence belongs to the adenoviridae hexon-linking protein family. As to quaternary structure, interacts with the peripentonal hexons as well as the hexons in the facets. Part of a complex composed of the core-capsid bridging protein, the endosome lysis protein VI and the hexon-linking protein VIII; these interactions bridge the virus core to the capsid. Cleaved by the viral protease during virion maturation. May cause the middle segment to be shed from the capsid.

Its subcellular location is the virion. It is found in the host nucleus. Functionally, structural component of the virion that acts as a cement protein on the capsid interior and which glue the peripentonal hexons and group-of-nine hexons together. This is Pre-hexon-linking protein VIII from Homo sapiens (Human).